Reading from the N-terminus, the 348-residue chain is Protein RecA (348 aa).

Position 69–76 (69–76 (GPESSGKT)) interacts with ATP.

The protein belongs to the RecA family.

Its subcellular location is the cytoplasm. In terms of biological role, can catalyze the hydrolysis of ATP in the presence of single-stranded DNA, the ATP-dependent uptake of single-stranded DNA by duplex DNA, and the ATP-dependent hybridization of homologous single-stranded DNAs. It interacts with LexA causing its activation and leading to its autocatalytic cleavage. This is Protein RecA from Gluconacetobacter polyoxogenes (Acetobacter polyoxogenes).